The sequence spans 208 residues: MDMGIPCSQLARRLLGKMLCRRIEGRTTKGMIVETEAYLGKEDKACHSYGGRRTERNSAMYMKAGTCYVYRIYGRYECFNISSVEAGAGVLVRALEPLCGVSEMRERRGGRVKDRDIANGPSKLCIAMGITRREIDKEWIAGSEKIWLEEGREVADPEIVAGRRIGIRNCGEWEEKKLRFYIRDNEFVSCIRRRELGNRKHGSVQQLP.

Belongs to the DNA glycosylase MPG family.

It is found in the nucleus. It catalyses the reaction Hydrolysis of alkylated DNA, releasing 3-methyladenine, 3-methylguanine, 7-methylguanine and 7-methyladenine.. Its function is as follows. Hydrolysis of the deoxyribose N-glycosidic bond to excise 3-methyladenine, and 7-methylguanine from the damaged DNA polymer formed by alkylation lesions. This chain is Probable DNA-3-methyladenine glycosylase, found in Encephalitozoon cuniculi (strain GB-M1) (Microsporidian parasite).